A 1522-amino-acid polypeptide reads, in one-letter code: Paired amphipathic helix protein pst1 (1522 aa).

Residues 139–174 (TILSSTDSNIPRPGTVKSSASPFVPNQNPSAPPPPP) form a disordered region. Positions 178–248 (RQLNVTDALS…QGFNTFLPPG (71 aa)) constitute a PAH 1 domain. The disordered stretch occupies residues 307-339 (QSSASHPVLQPPAPSTLQFNPSPSPAAPSYPPV). Residues 328 to 337 (SPSPAAPSYP) are compositionally biased toward pro residues. In terms of domain architecture, PAH 2 spans 345–415 (QAADLDQAIN…EEFKRFLPDV (71 aa)). Disordered regions lie at residues 422–504 (ETQD…AFNV), 928–968 (AREN…DESS), and 1343–1522 (SGKA…KDDL). Residues 426–441 (KSTVVPQESATATPKR) show a composition bias toward polar residues. Serine 442 is modified (phosphoserine). Residues 442 to 468 (SPSATPTSALPPIGKFAPPTTAKAQPA) show a composition bias toward low complexity. Residue threonine 446 is modified to Phosphothreonine. The region spanning 504–576 (VPIAQNKNPS…NWLKDLVKYN (73 aa)) is the PAH 3 domain. Positions 928-960 (ARENRSSVKEDYVSESTERTPDASEIDEHISEH) are enriched in basic and acidic residues. Positions 1385–1398 (GKSSVTRGNKTNLK) are enriched in polar residues. Positions 1403 to 1432 (RNNDDSSNKINLSEKEKEKESIEDEEKNRE) are enriched in basic and acidic residues. Serine 1443 carries the phosphoserine modification. Positions 1461–1474 (TSSHRPERSSEKKS) are enriched in basic and acidic residues. Positions 1478–1487 (VFTSVKQTAE) are enriched in polar residues. Positions 1488 to 1522 (NDADNEDDKTDMDDQTEETLDADNTMEEEPSKDDL) are enriched in acidic residues.

Its subcellular location is the nucleus. Its function is as follows. Has a role in modulating the nuclear import of TF1 virus-like particles. Essential for viability. The polypeptide is Paired amphipathic helix protein pst1 (pst1) (Schizosaccharomyces pombe (strain 972 / ATCC 24843) (Fission yeast)).